The primary structure comprises 428 residues: MKTSLFKSLYFQVLTAIAIGILLGHFYPEIGEQMKPLGDGFVKLIKMIIAPVIFCTVVTGIAGMESMKAVGRTGAVALLYFEIVSTIALIIGLIIVNVVQPGAGMNVDPATLDAKAVAVYADQAKDQGIVAFIMDVIPASVIGAFASGNILQVLLFAVLFGFALHRLGSKGQLIFNVIESFSQVIFGIINMIMRLAPIGAFGAMAFTIGKYGVGTLVQLGQLIICFYITCILFVVLVLGSIAKATGFSIFKFIRYIREELLIVLGTSSSESALPRMLDKMEKLGCRKSVVGLVIPTGYSFNLDGTSIYLTMAAVFIAQATNSQMDIVHQITLLIVLLLSSKGAAGVTGSGFIVLAATLSAVGHLPVAGLALILGIDRFMSEARALTNLVGNGVATIVVAKWVKELDHKKLDDVLNNRAPDGKTHELSS.

The next 8 membrane-spanning stretches (helical) occupy residues serine 8–proline 28, leucine 44–methionine 64, valine 76–valine 96, isoleucine 142–phenylalanine 162, valine 184–methionine 204, leucine 222–alanine 242, isoleucine 326–valine 346, and isoleucine 352–isoleucine 372.

The protein belongs to the dicarboxylate/amino acid:cation symporter (DAACS) (TC 2.A.23) family.

It is found in the cell inner membrane. Responsible for the transport of dicarboxylates such as succinate, fumarate, and malate from the periplasm across the membrane. The protein is C4-dicarboxylate transport protein of Escherichia coli O139:H28 (strain E24377A / ETEC).